The following is a 354-amino-acid chain: MMKMTMKMMVHIYFVSLLLLLFHSYAIDIENEITDFFNKMKDTLPAKDSKWLNPTCIFGGTMNNMAAIGEPFSAKCPPIEDSLLSRRYINKDNVVNWEKIGKTRRPLNRRVKNGDLWIANYTSNDSHRMYLCTVITKNGDCIQGIVRSHVRKPSSCIPEIYELGTHDKYGIDLYCGIIYAKHYNNITWYKDNKEINIDDIKYSQTGKELIIHNPALEDSGRYDCYVHYDDVRIKNDIVVSRCKILTVIPSQDHRFKLILDSKINVIIGEPANITCTAVSTSLLFDDVLIEWENPSGWLIGFDFDVYSVLTSRGGITEATLYFKNVTEEYIGNTYKCRGHNYYFEKTLTTTVVLE.

The signal sequence occupies residues 1 to 22 (MMKMTMKMMVHIYFVSLLLLLF). Ig-like C2-type domains follow at residues 68–150 (IGEP…RSHV) and 158–240 (PEIY…IVVS). Disulfide bonds link Cys-76-Cys-132 and Cys-175-Cys-224. Residues Asn-120, Asn-124, Asn-185, Asn-272, and Asn-324 are each glycosylated (N-linked (GlcNAc...) asparagine; by host). In terms of domain architecture, Ig-like V-type spans 249–348 (PSQDHRFKLI…HNYYFEKTLT (100 aa)). Cys-275 and Cys-336 are disulfide-bonded.

This sequence belongs to the interleukin-1 receptor family. As to quaternary structure, interacts with host IFNA1.

Its subcellular location is the secreted. Its function is as follows. Counteracts the antiviral effects of host IFN-alpha/beta and key IFN-inducible proteins involved in viral RNA degradation suxh as host OAS1. Acts as a soluble IFN-alpha receptor and thus inhibits the interaction between host IFN-alpha and its receptor. The sequence is that of Soluble interferon alpha/beta receptor OPG204 (OPG204) from Homo sapiens (Human).